Reading from the N-terminus, the 189-residue chain is Protein GrpE (189 aa).

Residues Met-1–Glu-37 are disordered. Residues Ser-17–Asp-33 are compositionally biased toward basic and acidic residues.

The protein belongs to the GrpE family. As to quaternary structure, homodimer.

The protein resides in the cytoplasm. Its function is as follows. Participates actively in the response to hyperosmotic and heat shock by preventing the aggregation of stress-denatured proteins, in association with DnaK and GrpE. It is the nucleotide exchange factor for DnaK and may function as a thermosensor. Unfolded proteins bind initially to DnaJ; upon interaction with the DnaJ-bound protein, DnaK hydrolyzes its bound ATP, resulting in the formation of a stable complex. GrpE releases ADP from DnaK; ATP binding to DnaK triggers the release of the substrate protein, thus completing the reaction cycle. Several rounds of ATP-dependent interactions between DnaJ, DnaK and GrpE are required for fully efficient folding. This Wolbachia sp. subsp. Drosophila simulans (strain wRi) protein is Protein GrpE.